Reading from the N-terminus, the 290-residue chain is Ubiquinone biosynthesis protein COQ4, mitochondrial (290 aa).

A mitochondrion-targeting transit peptide spans 1–32; that stretch reads MAKRVCVGDLRKLAGSVSTPSRCILPPHARCF. Zn(2+) contacts are provided by H168, D169, H172, and E184. Positions 260–290 are disordered; that stretch reads KPPDLREMRKAEREAQKKDKEAKETMTRAAV.

Belongs to the COQ4 family. Component of a multi-subunit COQ enzyme complex, composed of at least COQ3, COQ4, COQ5, COQ6, COQ7 and COQ9. It depends on Zn(2+) as a cofactor.

The protein resides in the mitochondrion inner membrane. It catalyses the reaction a 4-hydroxy-3-methoxy-5-(all-trans-polyprenyl)benzoate + H(+) = a 2-methoxy-6-(all-trans-polyprenyl)phenol + CO2. The protein operates within cofactor biosynthesis; ubiquinone biosynthesis. Lyase that catalyzes the C1-decarboxylation of 4-hydroxy-3-methoxy-5-(all-trans-polyprenyl)benzoic acid into 2-methoxy-6-(all-trans-polyprenyl)phenol during ubiquinone biosynthesis. The polypeptide is Ubiquinone biosynthesis protein COQ4, mitochondrial (Phaeosphaeria nodorum (strain SN15 / ATCC MYA-4574 / FGSC 10173) (Glume blotch fungus)).